Here is a 291-residue protein sequence, read N- to C-terminus: RPE-retinal G protein-coupled receptor (291 aa).

Residues 1-15 (MAESGTLPTGFGELE) lie on the Extracellular side of the membrane. A helical membrane pass occupies residues 16 to 36 (VLAVGTVLLVEALSGLSLNIL). Over 37-52 (TILSFCKTPELRTPSH) the chain is Cytoplasmic. Residues 53–73 (LLVLSLALADSGISLNALVAA) form a helical membrane-spanning segment. At 74–91 (TSSLLRRWPYGSEGCQAH) the chain is on the extracellular side. Residues cysteine 88 and cysteine 162 are joined by a disulfide bond. The chain crosses the membrane as a helical span at residues 92–112 (GFQGFVTALASICSSAAVAWG). The Cytoplasmic portion of the chain corresponds to 113–130 (RYHHFCTRSRLDWNTAVS). A helical transmembrane segment spans residues 131–151 (LVFFVWLSSAFWAALPLLGWG). Residues 152-175 (HYDYEPLGTCCTLDYSRGDRNFTS) are Extracellular-facing. Residue asparagine 172 is glycosylated (N-linked (GlcNAc...) asparagine). A helical transmembrane segment spans residues 176 to 196 (FLFTMAFFNFLLPLFITVVSY). Residues 197-219 (RLMEQKLGKTSRPPVNTVLPART) lie on the Cytoplasmic side of the membrane. The helical transmembrane segment at 220–240 (LLLGWGPYALLYLYATIADAT) threads the bilayer. Over 241–247 (SISPKLQ) the chain is Extracellular. The helical transmembrane segment at 248–268 (MVPALIAKAVPTVNAMNYALG) threads the bilayer. Lysine 255 carries the post-translational modification N6-(retinylidene)lysine. At 269 to 291 (SEMVHRGIWQCLSPQRREHSREQ) the chain is on the cytoplasmic side.

It belongs to the G-protein coupled receptor 1 family. Opsin subfamily. Post-translationally, covalently binds all-trans- and 11-cis-retinal. Preferentially expressed at high levels in the retinal pigment epithelium (RPE) and Mueller cells of the neural retina.

Its subcellular location is the membrane. In terms of biological role, receptor for all-trans- and 11-cis-retinal. Binds preferentially to the former and may catalyze the isomerization of the chromophore by a retinochrome-like mechanism. This chain is RPE-retinal G protein-coupled receptor (RGR), found in Bos taurus (Bovine).